We begin with the raw amino-acid sequence, 130 residues long: Small ribosomal subunit protein uS8 (130 aa).

It belongs to the universal ribosomal protein uS8 family. Part of the 30S ribosomal subunit.

Functionally, one of the primary rRNA binding proteins, it binds directly to 16S rRNA central domain where it helps coordinate assembly of the platform of the 30S subunit. The chain is Small ribosomal subunit protein uS8 from Methanococcus aeolicus (strain ATCC BAA-1280 / DSM 17508 / OCM 812 / Nankai-3).